We begin with the raw amino-acid sequence, 155 residues long: Probable ribosome biogenesis protein RLP24 (155 aa).

It belongs to the eukaryotic ribosomal protein eL24 family.

The protein is Probable ribosome biogenesis protein RLP24 (RPL24) of Encephalitozoon cuniculi (strain GB-M1) (Microsporidian parasite).